The chain runs to 502 residues: Phenylalanine--tRNA ligase alpha subunit (502 aa).

L-phenylalanine contacts are provided by residues T339, 382–384 (QIE), and Y422. Position 424 (E424) interacts with Mg(2+). Position 448 (F448) interacts with L-phenylalanine.

This sequence belongs to the class-II aminoacyl-tRNA synthetase family. Phe-tRNA synthetase alpha subunit type 2 subfamily. In terms of assembly, tetramer of two alpha and two beta subunits. It depends on Mg(2+) as a cofactor.

Its subcellular location is the cytoplasm. It carries out the reaction tRNA(Phe) + L-phenylalanine + ATP = L-phenylalanyl-tRNA(Phe) + AMP + diphosphate + H(+). The chain is Phenylalanine--tRNA ligase alpha subunit from Halobacterium salinarum (strain ATCC 29341 / DSM 671 / R1).